We begin with the raw amino-acid sequence, 366 residues long: Trans-enoyl reductase caaB (366 aa).

The Enoyl reductase (ER) domain maps to 19–363 (GAGQLSIYHD…RQTVSGHKLV (345 aa)). Tyr-219 contacts NADP(+).

Belongs to the zinc-containing alcohol dehydrogenase family. Monomer.

It participates in secondary metabolite biosynthesis. Trans-enoyl reductase; part of the gene cluster that produces the acyltetronic acid derivatives carlosic acid, agglomerin F and carlosic acid methyl ether. The PKS domains of caaA condenses two malonyl-CoAs into an acetyl starter unit, and form 1,3-diketohexanyl-ACP with the help of the trans-enoyl reductase caaB. Next, the C domain of caaA forms the ester bond between the acyl chain and L-malic acid (derived from the TCA cycle) and accepted by the A domain instead of an amino acid. Finally, the terminal reductase/Dieckmann cyclization (R/DKC) domain cyclizes the intermediate and releases the product as carlosic acid. Decarboxylation of carlosic acid followed by formation of the exocyclic double bond is likely to be catalyzed by the cytochrome P450 monooxygenase caaC. Thus, decarboxylation and oxidation would be coupled (performed by one enzyme) through concomitant abstraction of the hydrogen at C-4. Finally, sequential oxidations of the terminal C-10 methyl group to form carboxylic acid would be catalyzed by the 2-oxoglutarate-dependent dioxygenase caaD, which is required for the biosynthesis of agglomerin F. This chain is Trans-enoyl reductase caaB, found in Aspergillus niger (strain ATCC MYA-4892 / CBS 513.88 / FGSC A1513).